Consider the following 208-residue polypeptide: Ribosomal RNA large subunit methyltransferase E (208 aa).

Positions 63, 65, 83, 99, and 124 each coordinate S-adenosyl-L-methionine. The active-site Proton acceptor is the Lys-164.

This sequence belongs to the class I-like SAM-binding methyltransferase superfamily. RNA methyltransferase RlmE family.

It localises to the cytoplasm. The enzyme catalyses uridine(2552) in 23S rRNA + S-adenosyl-L-methionine = 2'-O-methyluridine(2552) in 23S rRNA + S-adenosyl-L-homocysteine + H(+). In terms of biological role, specifically methylates the uridine in position 2552 of 23S rRNA at the 2'-O position of the ribose in the fully assembled 50S ribosomal subunit. This is Ribosomal RNA large subunit methyltransferase E from Salmonella choleraesuis (strain SC-B67).